An 85-amino-acid chain; its full sequence is Sec-independent protein translocase protein TatA (85 aa).

A helical transmembrane segment spans residues 1-21; sequence MGGISIWQLLIIALIVVLLFG. Positions 43 to 85 are disordered; that stretch reads MSSDEDKKALEDAEAAKSVQTAQTAQPTQQATEKKPESNKEQA. Over residues 46 to 57 the composition is skewed to basic and acidic residues; that stretch reads DEDKKALEDAEA. Positions 58–73 are enriched in low complexity; that stretch reads AKSVQTAQTAQPTQQA. Basic and acidic residues predominate over residues 74–85; sequence TEKKPESNKEQA.

It belongs to the TatA/E family. As to quaternary structure, the Tat system comprises two distinct complexes: a TatABC complex, containing multiple copies of TatA, TatB and TatC subunits, and a separate TatA complex, containing only TatA subunits. Substrates initially bind to the TatABC complex, which probably triggers association of the separate TatA complex to form the active translocon.

The protein resides in the cell inner membrane. Functionally, part of the twin-arginine translocation (Tat) system that transports large folded proteins containing a characteristic twin-arginine motif in their signal peptide across membranes. TatA could form the protein-conducting channel of the Tat system. The chain is Sec-independent protein translocase protein TatA from Shewanella sp. (strain ANA-3).